A 450-amino-acid chain; its full sequence is Bicarbonate-binding protein CmpA (450 aa).

Residues 1-36 (MNEFQPVNRRQFLFTLGATAASAILLKGCGNPPSSS) constitute a signal peptide (tat-type signal).

It belongs to the CmpA/NrtA family. The complex is composed of two ATP-binding proteins (CmpC and CmpD), a transmembrane protein (CmpB) and a solute-binding protein (CmpA). Predicted to be exported by the Tat system. The position of the signal peptide cleavage has not been experimentally proven. Post-translationally, the N-terminus is blocked.

The protein localises to the cell inner membrane. Part of the ABC transporter complex CmpABCD involved in bicarbonate transport. Binds bicarbonate with high affinity. The polypeptide is Bicarbonate-binding protein CmpA (cmpA) (Synechococcus elongatus (strain ATCC 33912 / PCC 7942 / FACHB-805) (Anacystis nidulans R2)).